The following is a 442-amino-acid chain: Transcription factor AP-2-epsilon (442 aa).

The short motif at 54 to 59 is the PPxY motif element; sequence YFPPPY. A Phosphoserine; by PKA modification is found at S246. Residues 287–417 form an H-S-H (helix-span-helix), dimerization region; sequence RRKAANVTLL…YLLESLKGLD (131 aa).

Belongs to the AP-2 family. Binds DNA as a dimer. Can form homodimers or heterodimers with other AP-2 family members. As to expression, expressed in skin, primary keratinocytes, immortalized keratinocytes, and HeLa cell line.

It localises to the nucleus. In terms of biological role, sequence-specific DNA-binding protein that interacts with inducible viral and cellular enhancer elements to regulate transcription of selected genes. AP-2 factors bind to the consensus sequence 5'-GCCNNNGGC-3' and activate genes involved in a large spectrum of important biological functions including proper eye, face, body wall, limb and neural tube development. They also suppress a number of genes including MCAM/MUC18, C/EBP alpha and MYC. AP-2-epsilon may play a role in the development of the CNS and in cartilage differentiation. This Homo sapiens (Human) protein is Transcription factor AP-2-epsilon.